A 572-amino-acid polypeptide reads, in one-letter code: Phenylalanine--tRNA ligase beta subunit (572 aa).

The region spanning L278 to P353 is the B5 domain. D331, D337, E340, and D341 together coordinate Mg(2+).

The protein belongs to the phenylalanyl-tRNA synthetase beta subunit family. Type 2 subfamily. As to quaternary structure, tetramer of two alpha and two beta subunits. Mg(2+) serves as cofactor.

It is found in the cytoplasm. It catalyses the reaction tRNA(Phe) + L-phenylalanine + ATP = L-phenylalanyl-tRNA(Phe) + AMP + diphosphate + H(+). The polypeptide is Phenylalanine--tRNA ligase beta subunit (Thermococcus onnurineus (strain NA1)).